Consider the following 498-residue polypeptide: ATP synthase subunit alpha 1 (498 aa).

This sequence belongs to the ATPase alpha/beta chains family. In terms of assembly, F-type ATPases have 2 components, CF(1) - the catalytic core - and CF(0) - the membrane proton channel. CF(1) has five subunits: alpha(3), beta(3), gamma(1), delta(1), epsilon(1). CF(0) has three main subunits: a(1), b(2) and c(9-12). The alpha and beta chains form an alternating ring which encloses part of the gamma chain. CF(1) is attached to CF(0) by a central stalk formed by the gamma and epsilon chains, while a peripheral stalk is formed by the delta and b chains.

It localises to the cell membrane. The catalysed reaction is ATP + H2O + 4 H(+)(in) = ADP + phosphate + 5 H(+)(out). In terms of biological role, produces ATP from ADP in the presence of a proton gradient across the membrane. The alpha chain is a regulatory subunit. This chain is ATP synthase subunit alpha 1, found in Listeria monocytogenes serovar 1/2a (strain ATCC BAA-679 / EGD-e).